A 380-amino-acid polypeptide reads, in one-letter code: 2-aminoethylphosphonate--pyruvate transaminase (380 aa).

Lysine 204 is subject to N6-(pyridoxal phosphate)lysine.

The protein belongs to the class-V pyridoxal-phosphate-dependent aminotransferase family. PhnW subfamily. In terms of assembly, homodimer. Pyridoxal 5'-phosphate serves as cofactor.

The catalysed reaction is (2-aminoethyl)phosphonate + pyruvate = phosphonoacetaldehyde + L-alanine. Functionally, involved in phosphonate degradation. This is 2-aminoethylphosphonate--pyruvate transaminase from Aeromonas hydrophila subsp. hydrophila (strain ATCC 7966 / DSM 30187 / BCRC 13018 / CCUG 14551 / JCM 1027 / KCTC 2358 / NCIMB 9240 / NCTC 8049).